The chain runs to 121 residues: Flagellar protein FliT (121 aa).

Residues 1-50 (MNNAPHLYFAWQQLVEKSQLMLRLATEEQWDELIASEMAYVNAVQEIAHL) are required for homodimerization. The fliD binding stretch occupies residues 60–98 (MQEQLRPMLHLILDNESKVKQLLQIRMDELAKLVGQSSV).

It belongs to the FliT family. Homodimer. Interacts with FliD and FlhC.

The protein resides in the cytoplasm. The protein localises to the cytosol. Dual-function protein that regulates the transcription of class 2 flagellar operons and that also acts as an export chaperone for the filament-capping protein FliD. As a transcriptional regulator, acts as an anti-FlhDC factor; it directly binds FlhC, thus inhibiting the binding of the FlhC/FlhD complex to class 2 promoters, resulting in decreased expression of class 2 flagellar operons. As a chaperone, effects FliD transition to the membrane by preventing its premature polymerization, and by directing it to the export apparatus. The chain is Flagellar protein FliT from Shigella flexneri serotype 5b (strain 8401).